The following is a 326-amino-acid chain: tRNA uridine(34) hydroxylase (326 aa).

The region spanning S123–S217 is the Rhodanese domain. C177 acts as the Cysteine persulfide intermediate in catalysis.

Belongs to the TrhO family.

The catalysed reaction is uridine(34) in tRNA + AH2 + O2 = 5-hydroxyuridine(34) in tRNA + A + H2O. In terms of biological role, catalyzes oxygen-dependent 5-hydroxyuridine (ho5U) modification at position 34 in tRNAs. This chain is tRNA uridine(34) hydroxylase, found in Shewanella denitrificans (strain OS217 / ATCC BAA-1090 / DSM 15013).